We begin with the raw amino-acid sequence, 487 residues long: Sensor protein CseC (487 aa).

Low complexity predominate over residues 1 to 11 (MRGNLRRPGPA). Residues 1–41 (MRGNLRRPGPAGTAGPGRTGIRTSADGGRARPRTGAGTGVR) form a disordered region. A run of 2 helical transmembrane segments spans residues 63–83 (ISAA…LVVH) and 185–205 (ALII…VLIG). Residues 206 to 262 (GQLSRRLRKAAAAANQVAQGERDVRVRDAIGGVVRDETDDLARAVDAMADALQQRIE) form the HAMP domain. One can recognise a Histidine kinase domain in the interval 270–472 (DIAHELRTPV…VAVLWLPEHA (203 aa)). Position 273 is a phosphohistidine; by autocatalysis (His273).

It is found in the cell membrane. It carries out the reaction ATP + protein L-histidine = ADP + protein N-phospho-L-histidine.. This Streptomyces avermitilis (strain ATCC 31267 / DSM 46492 / JCM 5070 / NBRC 14893 / NCIMB 12804 / NRRL 8165 / MA-4680) protein is Sensor protein CseC (cseC).